We begin with the raw amino-acid sequence, 416 residues long: Tyrosine--tRNA ligase (416 aa).

Tyrosine 40 serves as a coordination point for L-tyrosine. The short motif at 45–54 (ATAASLHVGH) is the 'HIGH' region element. Positions 177 and 181 each coordinate L-tyrosine. A 'KMSKS' region motif is present at residues 237-241 (KMGKS). Position 240 (lysine 240) interacts with ATP. The S4 RNA-binding domain maps to 351-416 (LSVAHFLVAA…RKKHKLVRLS (66 aa)).

The protein belongs to the class-I aminoacyl-tRNA synthetase family. TyrS type 1 subfamily. As to quaternary structure, homodimer.

The protein resides in the cytoplasm. The catalysed reaction is tRNA(Tyr) + L-tyrosine + ATP = L-tyrosyl-tRNA(Tyr) + AMP + diphosphate + H(+). Functionally, catalyzes the attachment of tyrosine to tRNA(Tyr) in a two-step reaction: tyrosine is first activated by ATP to form Tyr-AMP and then transferred to the acceptor end of tRNA(Tyr). The protein is Tyrosine--tRNA ligase of Cereibacter sphaeroides (strain KD131 / KCTC 12085) (Rhodobacter sphaeroides).